A 195-amino-acid polypeptide reads, in one-letter code: 3-isopropylmalate dehydratase small subunit (195 aa).

It belongs to the LeuD family. LeuD type 1 subfamily. As to quaternary structure, heterodimer of LeuC and LeuD.

The enzyme catalyses (2R,3S)-3-isopropylmalate = (2S)-2-isopropylmalate. It participates in amino-acid biosynthesis; L-leucine biosynthesis; L-leucine from 3-methyl-2-oxobutanoate: step 2/4. Its function is as follows. Catalyzes the isomerization between 2-isopropylmalate and 3-isopropylmalate, via the formation of 2-isopropylmaleate. The polypeptide is 3-isopropylmalate dehydratase small subunit (Thermobifida fusca (strain YX)).